The chain runs to 254 residues: 14-3-3-like protein GF14 epsilon (254 aa).

2 positions are modified to phosphoserine: Ser65 and Ser188.

Belongs to the 14-3-3 family. Interacts with DREB1A and DREB1B in the nucleus. Interacts with CINV1.

It is found in the nucleus. The protein resides in the cytoplasm. Its function is as follows. Is associated with a DNA binding complex that binds to the G box, a well-characterized cis-acting DNA regulatory element found in plant genes. The protein is 14-3-3-like protein GF14 epsilon (GRF10) of Arabidopsis thaliana (Mouse-ear cress).